The following is a 232-amino-acid chain: uncharacterized protein (232 aa).

The signal sequence occupies residues Met1 to Ala32.

This is an uncharacterized protein from Mycobacterium bovis (strain ATCC BAA-935 / AF2122/97).